We begin with the raw amino-acid sequence, 145 residues long: UPF0201 protein Saci_1285 (145 aa).

Belongs to the UPF0201 family.

This Sulfolobus acidocaldarius (strain ATCC 33909 / DSM 639 / JCM 8929 / NBRC 15157 / NCIMB 11770) protein is UPF0201 protein Saci_1285.